The sequence spans 325 residues: Adenine deaminase (325 aa).

Zn(2+) is bound by residues histidine 8, histidine 10, and histidine 186. Catalysis depends on glutamate 189, which acts as the Proton donor. Residue aspartate 267 coordinates Zn(2+). A substrate-binding site is contributed by aspartate 268.

This sequence belongs to the metallo-dependent hydrolases superfamily. Adenosine and AMP deaminases family. Adenine deaminase type 2 subfamily. Zn(2+) serves as cofactor.

It carries out the reaction adenine + H2O + H(+) = hypoxanthine + NH4(+). Catalyzes the hydrolytic deamination of adenine to hypoxanthine. Plays an important role in the purine salvage pathway and in nitrogen catabolism. The chain is Adenine deaminase from Chelativorans sp. (strain BNC1).